A 458-amino-acid polypeptide reads, in one-letter code: MREIVHIQAGQCGNQIGAKFWEVISEEHGIDSSGAYIGTSDLQLDRAEVYYNEGSGGRYVPRAVLVDLEPGVLDTIKAGPHGGLYRPDNFVAGQSGAGNNWAKGHYTEGAELVDSVLDVVRREAEGCDCLQGFQVTHSLGGGTGSGMGTLLVSKIREEFPDRMMCTYSVMPSPKVSDTVVEPYNCTLSVHQLVENADAVFCIDNEALYNICYNTLKKPEPAYPDLNKLVSGVMSGITSSLRFPGQLNSDLRKLAVNLVPFPRLHFFMIGYAPLSADGVTAYRAKTVADLTKQMFDPKNMMADCDPRNGRYLTASAYFRGKVSTKEVEEQMDAIQTKNSGQFIDWIPNAIKASVCDVAPTGETMSAAFIGNSTAIQDIFKRVGSHFSAMFKRKAFLHWYTGEGMDEMEFTEAESNMNDLVSELQQYEAATVEGEEEEDEYAEGGVVNGDQSYDEPYQAA.

GTP-binding residues include Q11, E69, S138, G142, T143, G144, N204, and N226. E69 serves as a coordination point for Mg(2+). The disordered stretch occupies residues 426 to 458 (EAATVEGEEEEDEYAEGGVVNGDQSYDEPYQAA). Residues 431–440 (EGEEEEDEYA) are compositionally biased toward acidic residues.

Belongs to the tubulin family. Dimer of alpha and beta chains. A typical microtubule is a hollow water-filled tube with an outer diameter of 25 nm and an inner diameter of 15 nM. Alpha-beta heterodimers associate head-to-tail to form protofilaments running lengthwise along the microtubule wall with the beta-tubulin subunit facing the microtubule plus end conferring a structural polarity. Microtubules usually have 13 protofilaments but different protofilament numbers can be found in some organisms and specialized cells. Mg(2+) is required as a cofactor.

It is found in the cytoplasm. The protein localises to the cytoskeleton. Its function is as follows. Tubulin is the major constituent of microtubules, a cylinder consisting of laterally associated linear protofilaments composed of alpha- and beta-tubulin heterodimers. Microtubules grow by the addition of GTP-tubulin dimers to the microtubule end, where a stabilizing cap forms. Below the cap, tubulin dimers are in GDP-bound state, owing to GTPase activity of alpha-tubulin. The protein is Tubulin beta chain (TUBB1) of Pyropia yezoensis (Susabi-nori).